Consider the following 174-residue polypeptide: Ribosome maturation factor RimM (174 aa).

One can recognise a PRC barrel domain in the interval 97 to 169 (GNKFYFHEVI…KVVMDLPEGL (73 aa)).

Belongs to the RimM family. Binds ribosomal protein uS19.

Its subcellular location is the cytoplasm. An accessory protein needed during the final step in the assembly of 30S ribosomal subunit, possibly for assembly of the head region. Essential for efficient processing of 16S rRNA. May be needed both before and after RbfA during the maturation of 16S rRNA. It has affinity for free ribosomal 30S subunits but not for 70S ribosomes. This is Ribosome maturation factor RimM from Flavobacterium psychrophilum (strain ATCC 49511 / DSM 21280 / CIP 103535 / JIP02/86).